The following is a 179-amino-acid chain: Large ribosomal subunit protein uL6 (179 aa).

It belongs to the universal ribosomal protein uL6 family. As to quaternary structure, part of the 50S ribosomal subunit.

Its function is as follows. This protein binds to the 23S rRNA, and is important in its secondary structure. It is located near the subunit interface in the base of the L7/L12 stalk, and near the tRNA binding site of the peptidyltransferase center. The polypeptide is Large ribosomal subunit protein uL6 (Herpetosiphon aurantiacus (strain ATCC 23779 / DSM 785 / 114-95)).